A 204-amino-acid polypeptide reads, in one-letter code: RNA-free ribonuclease P (204 aa).

The protein belongs to the HARP family.

It catalyses the reaction Endonucleolytic cleavage of RNA, removing 5'-extranucleotides from tRNA precursor.. Its function is as follows. RNA-free RNase P that catalyzes the removal of the 5'-leader sequence from pre-tRNA to produce the mature 5'-terminus. This Ignicoccus hospitalis (strain KIN4/I / DSM 18386 / JCM 14125) protein is RNA-free ribonuclease P.